A 116-amino-acid chain; its full sequence is Transmembrane protein 213 (116 aa).

The first 35 residues, 1-35, serve as a signal peptide directing secretion; the sequence is MAQSGVFLRNPGHLTSAPQAALLFSLVLTSFHLSC. Residues 36–79 are Extracellular-facing; the sequence is GTETSSSNSTLSAHHPDPGTLEQCANVDFCPLASLCCRASVDEY. Residues 80–100 traverse the membrane as a helical segment; the sequence is GWIAAAVGWSFWFLTLILLCV. Residues 101–116 are Cytoplasmic-facing; the sequence is DKLMKLTPEEPKDLAA.

The protein localises to the membrane. The polypeptide is Transmembrane protein 213 (Tmem213) (Mus musculus (Mouse)).